Consider the following 346-residue polypeptide: [LysW]-lysine/[LysW]-ornithine hydrolase (346 aa).

Residue His-67 participates in Zn(2+) binding. Residue Asp-69 is part of the active site. Residue Asp-91 coordinates Zn(2+). Catalysis depends on Glu-121, which acts as the Proton acceptor. Residues Glu-122, Glu-145, and His-316 each coordinate Zn(2+).

It belongs to the peptidase M20A family. LysK subfamily. It depends on Zn(2+) as a cofactor. Co(2+) serves as cofactor.

The protein localises to the cytoplasm. The catalysed reaction is [amino-group carrier protein]-C-terminal-gamma-(L-lysyl)-L-glutamate + H2O = [amino-group carrier protein]-C-terminal-L-glutamate + L-lysine. The enzyme catalyses [amino-group carrier protein]-C-terminal-gamma-(L-ornithyl)-L-glutamate + H2O = [amino-group carrier protein]-C-terminal-L-glutamate + L-ornithine. Its pathway is amino-acid biosynthesis; L-lysine biosynthesis via AAA pathway; L-lysine from L-alpha-aminoadipate (Thermus route): step 5/5. The protein operates within amino-acid biosynthesis; L-arginine biosynthesis. Functionally, catalyzes the release of L-lysine from [LysW]-gamma-L-lysine and the release of L-ornithine from [LysW]-L-ornithine. The protein is [LysW]-lysine/[LysW]-ornithine hydrolase of Sulfurisphaera tokodaii (strain DSM 16993 / JCM 10545 / NBRC 100140 / 7) (Sulfolobus tokodaii).